We begin with the raw amino-acid sequence, 265 residues long: Thymidylate synthase (265 aa).

Residue Arg-21 participates in dUMP binding. Residue His-51 coordinates (6R)-5,10-methylene-5,6,7,8-tetrahydrofolate. Position 127 to 128 (127 to 128 (RR)) interacts with dUMP. Cys-147 acts as the Nucleophile in catalysis. DUMP-binding positions include 167 to 170 (RSAD), Asn-178, and 208 to 210 (HLY). Asp-170 serves as a coordination point for (6R)-5,10-methylene-5,6,7,8-tetrahydrofolate. Residue Ser-264 participates in (6R)-5,10-methylene-5,6,7,8-tetrahydrofolate binding.

The protein belongs to the thymidylate synthase family. Bacterial-type ThyA subfamily. In terms of assembly, homodimer.

Its subcellular location is the cytoplasm. The catalysed reaction is dUMP + (6R)-5,10-methylene-5,6,7,8-tetrahydrofolate = 7,8-dihydrofolate + dTMP. The protein operates within pyrimidine metabolism; dTTP biosynthesis. In terms of biological role, catalyzes the reductive methylation of 2'-deoxyuridine-5'-monophosphate (dUMP) to 2'-deoxythymidine-5'-monophosphate (dTMP) while utilizing 5,10-methylenetetrahydrofolate (mTHF) as the methyl donor and reductant in the reaction, yielding dihydrofolate (DHF) as a by-product. This enzymatic reaction provides an intracellular de novo source of dTMP, an essential precursor for DNA biosynthesis. The chain is Thymidylate synthase from Neisseria gonorrhoeae.